A 210-amino-acid polypeptide reads, in one-letter code: Ribosomal RNA small subunit methyltransferase G (210 aa).

Residues Gly-76, Leu-81, 127–128 (VE), and Arg-142 each bind S-adenosyl-L-methionine.

Belongs to the methyltransferase superfamily. RNA methyltransferase RsmG family.

It is found in the cytoplasm. It catalyses the reaction guanosine(527) in 16S rRNA + S-adenosyl-L-methionine = N(7)-methylguanosine(527) in 16S rRNA + S-adenosyl-L-homocysteine. In terms of biological role, specifically methylates the N7 position of guanine in position 527 of 16S rRNA. This is Ribosomal RNA small subunit methyltransferase G from Aliivibrio fischeri (strain ATCC 700601 / ES114) (Vibrio fischeri).